We begin with the raw amino-acid sequence, 362 residues long: Microfibril-associated glycoprotein 3 (362 aa).

The N-terminal stretch at 1-18 is a signal peptide; sequence MKLHCCLFTLVASIIVPA. The Extracellular segment spans residues 19 to 147; sequence AFVLEDVDFD…LRVIFTSGDM (129 aa). N-linked (GlcNAc...) asparagine glycosylation is found at Asn-36, Asn-41, and Asn-110. Positions 45-137 constitute an Ig-like C2-type domain; the sequence is PSSFELSASS…SPIRASYSVT (93 aa). Cysteines 73 and 124 form a disulfide. The helical transmembrane segment at 148-170 threads the bilayer; sequence SVYYMIVCLIAFTITLILNVTRL. Topologically, residues 171 to 362 are cytoplasmic; sequence CMMSSHLRKT…KDGAYENCQL (192 aa). Disordered stretches follow at residues 285–306 and 323–350; these read VINP…GSLN and ETKS…ESNC. Polar residues predominate over residues 323 to 337; the sequence is ETKSIDTESQGSSHF.

In terms of processing, glycosylated.

Its subcellular location is the cell membrane. Its function is as follows. Component of the elastin-associated microfibrils. The protein is Microfibril-associated glycoprotein 3 (MFAP3) of Homo sapiens (Human).